Reading from the N-terminus, the 448-residue chain is Exodeoxyribonuclease 7 large subunit (448 aa).

It belongs to the XseA family. Heterooligomer composed of large and small subunits.

The protein localises to the cytoplasm. The enzyme catalyses Exonucleolytic cleavage in either 5'- to 3'- or 3'- to 5'-direction to yield nucleoside 5'-phosphates.. In terms of biological role, bidirectionally degrades single-stranded DNA into large acid-insoluble oligonucleotides, which are then degraded further into small acid-soluble oligonucleotides. The chain is Exodeoxyribonuclease 7 large subunit from Tolumonas auensis (strain DSM 9187 / NBRC 110442 / TA 4).